Reading from the N-terminus, the 637-residue chain is Threonine--tRNA ligase (637 aa).

Residues 1-61 enclose the TGS domain; sequence MIKVTLKDGK…DKDCNLEILT (61 aa). Residues 242 to 532 are catalytic; sequence DHRKIGKELD…LIEHYAGAFP (291 aa). Zn(2+) is bound by residues Cys-333, His-384, and His-509.

The protein belongs to the class-II aminoacyl-tRNA synthetase family. Homodimer. It depends on Zn(2+) as a cofactor.

Its subcellular location is the cytoplasm. It carries out the reaction tRNA(Thr) + L-threonine + ATP = L-threonyl-tRNA(Thr) + AMP + diphosphate + H(+). In terms of biological role, catalyzes the attachment of threonine to tRNA(Thr) in a two-step reaction: L-threonine is first activated by ATP to form Thr-AMP and then transferred to the acceptor end of tRNA(Thr). Also edits incorrectly charged L-seryl-tRNA(Thr). The chain is Threonine--tRNA ligase from Clostridium acetobutylicum (strain ATCC 824 / DSM 792 / JCM 1419 / IAM 19013 / LMG 5710 / NBRC 13948 / NRRL B-527 / VKM B-1787 / 2291 / W).